A 268-amino-acid polypeptide reads, in one-letter code: Ribosomal RNA small subunit methyltransferase A (268 aa).

Asparagine 23, isoleucine 25, glycine 50, glutamate 72, aspartate 97, and asparagine 116 together coordinate S-adenosyl-L-methionine.

It belongs to the class I-like SAM-binding methyltransferase superfamily. rRNA adenine N(6)-methyltransferase family. RsmA subfamily.

The protein resides in the cytoplasm. It carries out the reaction adenosine(1518)/adenosine(1519) in 16S rRNA + 4 S-adenosyl-L-methionine = N(6)-dimethyladenosine(1518)/N(6)-dimethyladenosine(1519) in 16S rRNA + 4 S-adenosyl-L-homocysteine + 4 H(+). Functionally, specifically dimethylates two adjacent adenosines (A1518 and A1519) in the loop of a conserved hairpin near the 3'-end of 16S rRNA in the 30S particle. May play a critical role in biogenesis of 30S subunits. The polypeptide is Ribosomal RNA small subunit methyltransferase A (Rickettsia prowazekii (strain Madrid E)).